Here is a 344-residue protein sequence, read N- to C-terminus: Heat-inducible transcription repressor HrcA (344 aa).

This sequence belongs to the HrcA family.

Its function is as follows. Negative regulator of class I heat shock genes (grpE-dnaK-dnaJ and groELS operons). Prevents heat-shock induction of these operons. This Streptococcus pneumoniae (strain Taiwan19F-14) protein is Heat-inducible transcription repressor HrcA.